A 307-amino-acid polypeptide reads, in one-letter code: Ribosomal RNA small subunit methyltransferase H (307 aa).

S-adenosyl-L-methionine contacts are provided by residues 32-34 (GGH), Asp-52, Phe-78, Asp-99, and Gln-106.

The protein belongs to the methyltransferase superfamily. RsmH family.

It localises to the cytoplasm. The enzyme catalyses cytidine(1402) in 16S rRNA + S-adenosyl-L-methionine = N(4)-methylcytidine(1402) in 16S rRNA + S-adenosyl-L-homocysteine + H(+). In terms of biological role, specifically methylates the N4 position of cytidine in position 1402 (C1402) of 16S rRNA. The chain is Ribosomal RNA small subunit methyltransferase H from Acinetobacter baumannii (strain AB307-0294).